A 435-amino-acid chain; its full sequence is Serine--tRNA ligase (435 aa).

Threonine 242 to glutamate 244 is a binding site for L-serine. Arginine 273 to glutamate 275 serves as a coordination point for ATP. Glutamate 296 lines the L-serine pocket. Residue glutamate 360 to serine 363 participates in ATP binding. Serine 396 lines the L-serine pocket.

It belongs to the class-II aminoacyl-tRNA synthetase family. Type-1 seryl-tRNA synthetase subfamily. As to quaternary structure, homodimer. The tRNA molecule binds across the dimer.

The protein resides in the cytoplasm. The catalysed reaction is tRNA(Ser) + L-serine + ATP = L-seryl-tRNA(Ser) + AMP + diphosphate + H(+). It catalyses the reaction tRNA(Sec) + L-serine + ATP = L-seryl-tRNA(Sec) + AMP + diphosphate + H(+). It functions in the pathway aminoacyl-tRNA biosynthesis; selenocysteinyl-tRNA(Sec) biosynthesis; L-seryl-tRNA(Sec) from L-serine and tRNA(Sec): step 1/1. In terms of biological role, catalyzes the attachment of serine to tRNA(Ser). Is also able to aminoacylate tRNA(Sec) with serine, to form the misacylated tRNA L-seryl-tRNA(Sec), which will be further converted into selenocysteinyl-tRNA(Sec). This is Serine--tRNA ligase from Vibrio vulnificus (strain YJ016).